The following is a 709-amino-acid chain: Catalase HPII (709 aa).

Residues 1–26 show a composition bias toward polar residues; the sequence is MSEQNNEQRSQAAGTDTVDRGNSNAK. The disordered stretch occupies residues 1–32; it reads MSEQNNEQRSQAAGTDTVDRGNSNAKLEQLEA. Residues histidine 90 and asparagine 163 contribute to the active site. Tyrosine 377 contacts heme. The interval 419-443 is disordered; it reads RASYEPNSIDGGWPKETPPAARNGG.

This sequence belongs to the catalase family. HPII subfamily. Heme is required as a cofactor.

Its subcellular location is the cytoplasm. It catalyses the reaction 2 H2O2 = O2 + 2 H2O. Decomposes hydrogen peroxide into water and oxygen; serves to protect cells from the toxic effects of hydrogen peroxide. This Pseudomonas aeruginosa (strain ATCC 15692 / DSM 22644 / CIP 104116 / JCM 14847 / LMG 12228 / 1C / PRS 101 / PAO1) protein is Catalase HPII (katE).